The chain runs to 640 residues: Paramyosin, short form (640 aa).

Nonhelical region stretches follow at residues 1–122 and 420–640; these read MALA…PDTV and KLEQ…TITE. The stretch at 123–619 forms a coiled coil; that stretch reads VERSRQRRRR…IIRAKHRTFV (497 aa).

This sequence belongs to the paramyosin family. Phosphorylated. As to expression, found in all adult muscle tissues except in indirect flight muscles and a set of temporary abdominal muscles. Not detected in larval muscle.

Its subcellular location is the cytoplasm. It is found in the myofibril. Its function is as follows. Paramyosin is a major structural component of many thick filaments isolated from invertebrate muscles. The sequence is that of Paramyosin, short form (Prm) from Drosophila melanogaster (Fruit fly).